Reading from the N-terminus, the 400-residue chain is Ubiquitin-like modifier-activating enzyme 5 (400 aa).

ATP contacts are provided by Gly76, Asp97, Lys120, Asn143, and Asn177. 2 residues coordinate Zn(2+): Cys219 and Cys222. Cys243 serves as the catalytic Glycyl thioester intermediate. The Zn(2+) site is built by Cys296 and Cys301.

It belongs to the ubiquitin-activating E1 family. UBA5 subfamily.

Its function is as follows. E1-like enzyme which activates UFM1. The sequence is that of Ubiquitin-like modifier-activating enzyme 5 from Drosophila virilis (Fruit fly).